The primary structure comprises 519 residues: Ribonuclease Y (519 aa).

A helical membrane pass occupies residues 3 to 23 (PMTVLISILLTLLGLVVGYYV). In terms of domain architecture, KH spans 209–272 (TVSVVNLPND…ETARIALDKL (64 aa)). The HD domain occupies 335–428 (VLKHSMEVAF…VAAADALSAA (94 aa)).

It belongs to the RNase Y family.

It is found in the cell membrane. Its function is as follows. Endoribonuclease that initiates mRNA decay. This is Ribonuclease Y from Bacillus velezensis (strain DSM 23117 / BGSC 10A6 / LMG 26770 / FZB42) (Bacillus amyloliquefaciens subsp. plantarum).